Consider the following 1012-residue polypeptide: MSAAHELPIRERLAHWVEHLTHVLPAQAPIRDFVHHNTLHGFQHLPFTEALASAQALTGATTYWPESRFRECLASGRISPDDLSAALDDFGVGDLDQPVVRNLTRRDILLASLRFGCEAPNACRQAWLLDETSLADDPLFAYFCRSVELAPSKGASENWQVQALARWDALCGRVGRTWTWRALLEYLSGEDVLEWTRSILQRHLAAHLDLGVAAWRNPAQGQGFFAAWRASAGLDMAWEMDELPNARDEILHLPDSPLDVLLEELPRLVPDHSQWYGYLERLSLELPGWSGMFLWRDRNPGRGDGTPIAMLDYLTVRVLLERLLTDDLLRRLAGSPLSLAELHAYYAARPEEFLVRAALHEPGLPEDLLGRAAHLVQLAREGHVDVAEWRRLAAALAPAMAAAQDDGAAWQMAGLSRQLGLTPADLEMLSGDDLTALQTCAASLSSLQRGHIWLLAYERHYREQLFSALTANHPRQATPAAPSAQVVMCMDDREEGTRRHLEEIAPDVATYGAAGFFGVPMFWQGLDDAGKTALCPVVVQPTHLLRELPAAGEEGSLAGHAARREKRLRWNERLYQATRRRAVAGPVLTALGAVPALASLLAVTLVPGWFGETARRWREQYEGRVSTRLGLTAEQPVAATPEQPQLGLTDAEQIERVEAFLRMIGLTAGFAPLVLMFGHGSGSQNNPHLSAYDCGACSGKHGGPNARVFAAMANRPAVRAGLAARGLSIPDSTWFVAAEHNTCDDGIEWYDLDSTPERFQAAVDRLLGQMAEACRAHAAERCRRLASAPFKPSPWKARQHMIGRANDISQARPELGHATNAAAFIGRRQMSRGLFLDRRVFLISYDPVGDDDGCIVEGILLAAGPVGAGIALEYYFSTVDNERFGCGSKITHNITGLFGVMEGADSDLRTGLPWQMVEIHEPMRLLVVVEQTPEVLTAIVGRQPPLQELINNEWIIVAAKHPITGAIDLYCPRRGWLPWSGQAVLPQVARSVDWFAGESQPLAPAIILGGVR.

4 residues coordinate Zn(2+): C489, D491, H679, and C694.

The protein belongs to the inorganic carbon transporter (TC 9.A.2) DabA family. Forms a complex with DabB. Requires Zn(2+) as cofactor.

It is found in the cell inner membrane. Its function is as follows. Part of an energy-coupled inorganic carbon pump. The protein is Probable inorganic carbon transporter subunit DabA of Dechloromonas aromatica (strain RCB).